The following is a 189-amino-acid chain: Chitin synthase 1 (189 aa).

This sequence belongs to the chitin synthase family. Class I subfamily.

Its subcellular location is the cell membrane. It carries out the reaction [(1-&gt;4)-N-acetyl-beta-D-glucosaminyl](n) + UDP-N-acetyl-alpha-D-glucosamine = [(1-&gt;4)-N-acetyl-beta-D-glucosaminyl](n+1) + UDP + H(+). Functionally, polymerizes chitin, a structural polymer of the cell wall and septum, by transferring the sugar moiety of UDP-GlcNAc to the non-reducing end of the growing chitin polymer. This chain is Chitin synthase 1 (CHS1), found in Exophiala jeanselmei (Dematiaceous fungus).